The following is a 160-amino-acid chain: Nascent polypeptide-associated complex subunit alpha (160 aa).

Positions 10 to 75 (TKGEKKTREA…HSFDDIASRL (66 aa)) constitute an NAC-A/B domain. Positions 120 to 159 (VNPKDVEVVMKETKASREKVVETLIATKNDLVSAVLELTT) constitute a UBA domain.

It belongs to the NAC-alpha family. As to quaternary structure, part of the nascent polypeptide-associated complex (NAC), consisting of nacA and nacB.

It is found in the cytoplasm. The protein resides in the nucleus. Component of the nascent polypeptide-associated complex (NAC), a dynamic component of the ribosomal exit tunnel, protecting the emerging polypeptides from interaction with other cytoplasmic proteins to ensure appropriate nascent protein targeting. The NAC complex also promotes mitochondrial protein import by enhancing productive ribosome interactions with the outer mitochondrial membrane and blocks the inappropriate interaction of ribosomes translating non-secretory nascent polypeptides with translocation sites in the membrane of the endoplasmic reticulum. May also be involved in transcription regulation. The protein is Nascent polypeptide-associated complex subunit alpha (nacA) of Dictyostelium discoideum (Social amoeba).